The chain runs to 525 residues: Tubulin-specific chaperone E (525 aa).

In terms of domain architecture, CAP-Gly spans G33–K77. LRR repeat units follow at residues T300 to L321, Q326 to D347, and N362 to D383. The interval E414 to N444 is disordered. Low complexity predominate over residues E422–N444. In terms of domain architecture, LRRCT spans N441–Y481.

The protein belongs to the TBCE family. In terms of assembly, supercomplex made of cofactors A to E. Cofactors A and D function by capturing and stabilizing tubulin in a quasi-native conformation. Cofactor E binds to the cofactor D-tubulin complex; interaction with cofactor C then causes the release of tubulin polypeptides that are committed to the native state.

The protein localises to the cytoplasm. Its subcellular location is the cytoskeleton. Tubulin-folding protein; involved in the second step of the tubulin folding pathway. This is Tubulin-specific chaperone E (tbce) from Dictyostelium discoideum (Social amoeba).